The following is a 345-amino-acid chain: CCAAT/enhancer-binding protein beta (345 aa).

A required for Lys-174 sumoylation region spans residues 1-24 (MQRLVAWDPACLPLPPPPPAFKSM). Arginine 3 is subject to Asymmetric dimethylarginine; by CARM1. Residues 24–135 (MEVANFYYEA…YGGKNCKKPA (112 aa)) form a required for MYC transcriptional repression region. Lysine 43 carries the N6-acetyllysine; alternate modification. Lysine 43 carries the N6-methylated lysine; alternate modification. Disordered stretches follow at residues 46 to 67 (PAAP…GSIG) and 79 to 116 (LEPL…QHHD). Residues 47–59 (AAPPAARPGPRPP) show a composition bias toward pro residues. Over residues 84–100 (APQAPAPATATDTFEAA) the composition is skewed to low complexity. The short motif at 116–124 (DFLSDLFSD) is the 9aaTAD element. N6-acetyllysine; by KAT2A and KAT2B is present on residues lysine 129 and lysine 132. Lysine 133 carries the N6-acetyllysine; by KAT2A and KAT2B; alternate modification. Lysine 133 is covalently cross-linked (Glycyl lysine isopeptide (Lys-Gly) (interchain with G-Cter in SUMO2); alternate). Positions 157 to 178 (FAPLHPPPPPPPPPAELKAEPG) are disordered. Residues 160–171 (LHPPPPPPPPPA) show a composition bias toward pro residues. Lysine 174 participates in a covalent cross-link: Glycyl lysine isopeptide (Lys-Gly) (interchain with G-Cter in SUMO2); alternate. Residue lysine 174 forms a Glycyl lysine isopeptide (Lys-Gly) (interchain with G-Cter in SUMO); alternate linkage. Residues lysine 185 and lysine 187 each participate in a glycyl lysine isopeptide (Lys-Gly) (interchain with G-Cter in SUMO2) cross-link. Over residues 218–232 (SGSSGSLSTSSSSSP) the composition is skewed to low complexity. A disordered region spans residues 218–271 (SGSSGSLSTSSSSSPPGTPSPADAKAPPTACYAGAAPAPSQVKSKAKKTVDKHS). Threonine 226 carries the phosphothreonine; by GSK3-beta modification. Serine 227 and serine 228 each carry an O-linked (GlcNAc) serine glycan. Position 231 is a phosphoserine; by GSK3-beta (serine 231). Phosphothreonine; by RPS6KA1, CDK2 and MAPK is present on threonine 235. Glycyl lysine isopeptide (Lys-Gly) (interchain with G-Cter in SUMO2) cross-links involve residues lysine 260 and lysine 262. Threonine 266 is subject to Phosphothreonine; by RPS6KA1 and PKC/PRKCA. One can recognise a bZIP domain in the interval 271–334 (SDEYKIRRER…STLRNLFKQL (64 aa)). Residues 275–295 (KIRRERNNIAVRKSRDKAKMR) are basic motif. The residue at position 288 (serine 288) is a Phosphoserine; by PKC/PRKCA. The segment at 297–304 (LETQHKVL) is leucine-zipper. Serine 325 is modified (phosphoserine; by CaMK2). Residue lysine 332 forms a Glycyl lysine isopeptide (Lys-Gly) (interchain with G-Cter in SUMO2) linkage.

The protein belongs to the bZIP family. C/EBP subfamily. As to quaternary structure, binds DNA as a homodimer and as a heterodimer. Interacts with ATF4. Binds DNA as a heterodimer with ATF4. Interacts with MYB; within the complex, MYB and CEBPB bind to different promoter regions. Can form stable heterodimers with CEBPD. Can form stable heterodimers with CEBPA and CEBPE. Interacts with SIX1. Isoform 2 and isoform 3 also form heterodimers. Interacts with TRIM28 and PTGES2. Interacts with PRDM16. Interacts with CCDC85B. Forms a complex with THOC5. Interacts with ZNF638; this interaction increases transcriptional activation. Interacts with CIDEA and CIDEC; these interactions increase transcriptional activation of a subset of CEBPB downstream target genes. Interacts with DDIT3/CHOP. Interacts with EP300; recruits EP300 to chromatin. Interacts with RORA; the interaction disrupts interaction with EP300. Interacts (not methylated) with MED23, MED26, SMARCA2, SMARCB1 and SMARCC1. Interacts with KAT2A and KAT2B. Interacts with ATF5; EP300 is required for ATF5 and CEBPB interaction and DNA binding. Interacts with NFE2L1; the heterodimer represses expression of DSPP during odontoblast differentiation. Methylated. Methylation at Arg-3 by CARM1 and at Lys-43 by EHMT2 inhibit transactivation activity. Methylation is probably inhibited by phosphorylation at Thr-235. Post-translationally, sumoylated by polymeric chains of SUMO2 or SUMO3. Sumoylation at Lys-174 is required for inhibition of T-cells proliferation. In adipocytes, sumoylation at Lys-174 by PIAS1 leads to ubiquitination and subsequent proteasomal degradation. Desumoylated by SENP2, which abolishes ubiquitination and stabilizes protein levels. In terms of processing, ubiquitinated, leading to proteasomal degradation. Phosphorylated at Thr-235 by MAPK and CDK2, serves to prime phosphorylation at Thr-226 and Ser-231 by GSK3B and acquire DNA-binding as well as transactivation activities, required to induce adipogenesis. MAPK and CDK2 act sequentially to maintain Thr-235 in the primed phosphorylated state during mitotical cloning expansion and thereby progression of terminal differentiation. Phosphorylation at Thr-266 enhances transactivation activity. Phosphorylation at Ser-325 in response to calcium increases transactivation activity. Phosphorylated at Thr-235 by RPS6KA1. Post-translationally, O-glycosylated, glycosylation at Ser-227 and Ser-228 prevents phosphorylation on Thr-235, Ser-231 and Thr-226 and DNA binding activity which delays the adipocyte differentiation program. In terms of processing, acetylated. Acetylation at Lys-43 is an important and dynamic regulatory event that contributes to its ability to transactivate target genes, including those associated with adipogenesis and adipocyte function. Deacetylation by HDAC1 represses its transactivation activity. Acetylated by KAT2A and KAT2B within a cluster of lysine residues between amino acids 129-133, this acetylation is strongly induced by glucocorticoid treatment and enhances transactivation activity. Expressed at low levels in the lung, kidney and spleen.

The protein resides in the nucleus. It localises to the cytoplasm. Functionally, important transcription factor regulating the expression of genes involved in immune and inflammatory responses. Also plays a significant role in adipogenesis, as well as in the gluconeogenic pathway, liver regeneration, and hematopoiesis. The consensus recognition site is 5'-T[TG]NNGNAA[TG]-3'. Its functional capacity is governed by protein interactions and post-translational protein modifications. During early embryogenesis, plays essential and redundant roles with CEBPA. Has a promitotic effect on many cell types such as hepatocytes and adipocytes but has an antiproliferative effect on T-cells by repressing MYC expression, facilitating differentiation along the T-helper 2 lineage. Binds to regulatory regions of several acute-phase and cytokines genes and plays a role in the regulation of acute-phase reaction and inflammation. Also plays a role in intracellular bacteria killing. During adipogenesis, is rapidly expressed and, after activation by phosphorylation, induces CEBPA and PPARG, which turn on the series of adipocyte genes that give rise to the adipocyte phenotype. The delayed transactivation of the CEBPA and PPARG genes by CEBPB appears necessary to allow mitotic clonal expansion and thereby progression of terminal differentiation. Essential for female reproduction because of a critical role in ovarian follicle development. Restricts osteoclastogenesis: together with NFE2L1; represses expression of DSPP during odontoblast differentiation. Essential for gene expression induction in activated macrophages. Plays a major role in immune responses such as CD4(+) T-cell response, granuloma formation and endotoxin shock. Not essential for intracellular bacteria killing. Its function is as follows. Acts as a dominant negative through heterodimerization with isoform 2. Promotes osteoblast differentiation and osteoclastogenesis. This chain is CCAAT/enhancer-binding protein beta, found in Homo sapiens (Human).